The following is a 650-amino-acid chain: Probable ATP-dependent RNA helicase DDX17 (650 aa).

Positions 1–38 are disordered; sequence MRGGGFGDRDRDRDRGGFGARGGSGLPPKKFGNPGERL. The segment covering 7–16 has biased composition (basic and acidic residues); it reads GDRDRDRDRG. 3 positions are modified to N6-acetyllysine: K29, K30, and K42. Residue K50 forms a Glycyl lysine isopeptide (Lys-Gly) (interchain with G-Cter in SUMO); alternate linkage. A Glycyl lysine isopeptide (Lys-Gly) (interchain with G-Cter in SUMO1); alternate cross-link involves residue K50. A Glycyl lysine isopeptide (Lys-Gly) (interchain with G-Cter in SUMO2); alternate cross-link involves residue K50. The Q motif signature appears at 92–120; the sequence is FAFHHANFPQYVMDVLMDQHFTEPTPIQC. Residues 123 to 298 form the Helicase ATP-binding domain; sequence FPLALSGRDM…EDFLRDYTQI (176 aa). 136-143 provides a ligand contact to ATP; sequence AQTGSGKT. The short motif at 246-249 is the DEAD box element; the sequence is DEAD. The 148-residue stretch at 326–473 folds into the Helicase C-terminal domain; the sequence is KLIQLMEEIM…AINPKLMQLV (148 aa). Residue T444 is modified to Phosphothreonine. A Glycyl lysine isopeptide (Lys-Gly) (interchain with G-Cter in SUMO2) cross-link involves residue K449. The transactivation domain stretch occupies residues 468–650; sequence KLMQLVDHRG…PPPPPPPSRK (183 aa). 2 disordered regions span residues 472 to 543 and 583 to 650; these read LVDH…YGSP and ASST…PSRK. The segment covering 489–499 has biased composition (polar residues); sequence RTTSSANNPNL. Residues 504 to 531 show a composition bias toward basic and acidic residues; the sequence is ECDRRLRGVKDGGRRDSTSYRDRSETDR. Residues 583 to 609 show a composition bias toward low complexity; the sequence is ASSTASAGRSSQSSSQQFSGIGRSGQQ. R605 carries the post-translational modification Omega-N-methylarginine. Over residues 610 to 619 the composition is skewed to polar residues; it reads PQPLMSQQFA. The span at 638-650 shows a compositional bias: pro residues; it reads YPPPPPPPPPSRK. Residues 639-647 form an interaction with YAP1 region; the sequence is PPPPPPPPP.

This sequence belongs to the DEAD box helicase family. DDX5/DBP2 subfamily. In terms of assembly, interacts with DDX5 in an RNA-independent manner. Interacts with CDK9 transcription elongation complex under basal conditions. Following cell stimulation with poly(I:C), a synthetic double-stranded RNA mimicking viral infection, the interaction with CDK9 is decreased. Interacts with ESR1 in an estrogen-independent manner. Interacts with HNRNPH1; this interaction is important for the regulation of alternative splicing on G-quadruplex structures. At high, but not low, cell density, interacts with DROSHA and DGCR8, the core components of the microprocessor complex involved in the maturation of primary microRNAs (pri-miRNAs) into pre-miRNAs. The interaction with DGCR8 is reduced during mitosis. At low, but not high, cell density, interacts with YAP1 and with its paralog, WWTR1/TAZ. Interactions with DROSHA and YAP1 are mutually exclusive. In vitro, the pre-miRNA processing activity of the DDX17-containing microprocessor complex is weaker than that of the DROSHA/DGCR8 microprocessor complex. Interacts with UPF3B. Interacts with NFAT5; this interaction leads to DDX17 recruitment to LNC2 and S100A4 promoters and NFAT5-mediated DDX17-enhanced transactivation. Interacts with HDAC1, HDAC2 and HDAC3; this interaction with HDAC1 and HDAC3, but not HDAC2, depends upon DDX17 acetylation. Interacts with ZC3HAV1 (via N-terminal domain) in an RNA-independent manner. Interacts with EXOSC3/RRP40 and EXOSC5/RRP46; this interaction may be indirect and mediated by ZC3HAV1-binding. Interacts with EP300; this interaction leads to acetylation at lysine residues. Interacts with CREBBP/CBP and KAT2B/P/CAF. Directly interacts with CTNNB1. Interacts with MYOD1. Interacts with TP53. Interacts with DCP1A in an RNA-independent manner. Interacts with DCP2 in an RNA-dependent manner. Interacts with DHX36; this interaction occurs in a RNA-dependent manner. Interacts with ERCC6. Sumoylation significantly increases stability. It also promotes interaction specifically with HDAC1 (but not HDAC2, nor HDAC3) and strongly stimulates ESR1 and TP53 coactivation. Post-translationally, acetylation at lysine residues stabilizes the protein, stimulates interaction with HDAC1 and HDAC3, but not HDAC2, and represses ESR1 and TP53 coactivation activity.

Its subcellular location is the nucleus. It is found in the nucleolus. The protein localises to the cytoplasm. It localises to the cytosol. It catalyses the reaction ATP + H2O = ADP + phosphate + H(+). Its function is as follows. As an RNA helicase, unwinds RNA and alters RNA structures through ATP binding and hydrolysis. Involved in multiple cellular processes, including pre-mRNA splicing, alternative splicing, ribosomal RNA processing and miRNA processing, as well as transcription regulation. Regulates the alternative splicing of exons exhibiting specific features. This function requires the RNA helicase activity. Affects NFAT5 and histone macro-H2A.1/MACROH2A1 alternative splicing in a CDK9-dependent manner. Affects splicing of mediators of steroid hormone signaling pathway, including kinases that phosphorylates ESR1 and transcriptional regulators. By acting splicing of regulatory factors, participates in ESR1 and AR stabilization. Promotes the inclusion of specific AC-rich alternative exons in CD44 transcripts. In myoblasts and epithelial cells, cooperates with HNRNPH1 to control the splicing of specific subsets of exons. In addition to binding mature mRNAs, also interacts with certain pri-microRNAs, including MIR132/miR-132, and stabilizes the primary transcript. Also participates in the MIR132 processing, resulting in significantly higher levels of mature MIR132 than MIR212 despite the fact that both are cotranscribed and co-regulated. Binding of pri-microRNAs may occur on the 3' segment flanking the stem loop via the 5'-[ACG]CAUC[ACU]-3' consensus sequence. Participates in MYC down-regulation at high cell density through the production of MYC-targeting microRNAs. Along with DDX5, may be involved in the processing of the 32S intermediate into the mature 28S rRNA. Promoter-specific transcription regulator, functioning as a coactivator or corepressor depending on the context of the promoter and the transcriptional complex in which it exists. Enhances NFAT5 transcriptional activity. Synergizes with TP53 in the activation of the MDM2 promoter; this activity requires acetylation on lysine residues. May also coactivate MDM2 transcription through a TP53-independent pathway. Coactivates MMP7 transcription. Along with CTNNB1, coactivates MYC, JUN, FOSL1 and cyclin D1/CCND1 transcription. Alone or in combination with DDX5 and/or SRA1 non-coding RNA, plays a critical role in promoting the assembly of proteins required for the formation of the transcription initiation complex and chromatin remodeling leading to coactivation of MYOD1-dependent transcription. This helicase-independent activity is required for skeletal muscle cells to properly differentiate into myotubes. During epithelial-to-mesenchymal transition, coregulates SMAD-dependent transcriptional activity, directly controlling key effectors of differentiation, including miRNAs which in turn directly repress its expression. Plays a role in estrogen and testosterone signaling pathway at several levels. Mediates the use of alternative promoters in estrogen-responsive genes and regulates transcription and splicing of a large number of steroid hormone target genes. Contrary to the splicing regulation activity, transcriptional coregulation of the estrogen receptor ESR1 is helicase activity-independent. Plays a role in innate immunity. Specifically restricts bunyavirus infection, including Rift Valley fever virus (RVFV) or La Crosse virus (LACV), but not vesicular stomatitis virus (VSV), in an interferon- and DROSHA-independent manner. Binds to RVFV RNA, likely via structured viral RNA elements. Promotes mRNA degradation mediated by the antiviral zinc-finger protein ZC3HAV1, in an ATPase-dependent manner. The chain is Probable ATP-dependent RNA helicase DDX17 (Ddx17) from Mus musculus (Mouse).